The primary structure comprises 347 residues: Phosphoribosylformylglycinamidine cyclo-ligase (347 aa).

It belongs to the AIR synthase family.

The protein resides in the cytoplasm. It carries out the reaction 2-formamido-N(1)-(5-O-phospho-beta-D-ribosyl)acetamidine + ATP = 5-amino-1-(5-phospho-beta-D-ribosyl)imidazole + ADP + phosphate + H(+). It functions in the pathway purine metabolism; IMP biosynthesis via de novo pathway; 5-amino-1-(5-phospho-D-ribosyl)imidazole from N(2)-formyl-N(1)-(5-phospho-D-ribosyl)glycinamide: step 2/2. The protein is Phosphoribosylformylglycinamidine cyclo-ligase of Prochlorococcus marinus (strain AS9601).